The following is a 131-amino-acid chain: Glycine cleavage system H protein (131 aa).

The 83-residue stretch at 24–106 (TVRVGITDYA…YGEGWLVELQ (83 aa)) folds into the Lipoyl-binding domain. Lys-65 is subject to N6-lipoyllysine.

The protein belongs to the GcvH family. The glycine cleavage system is composed of four proteins: P, T, L and H. (R)-lipoate serves as cofactor.

The glycine cleavage system catalyzes the degradation of glycine. The H protein shuttles the methylamine group of glycine from the P protein to the T protein. This chain is Glycine cleavage system H protein, found in Mycolicibacterium gilvum (strain PYR-GCK) (Mycobacterium gilvum (strain PYR-GCK)).